We begin with the raw amino-acid sequence, 344 residues long: Protein RecA (344 aa).

65-72 (GPESSGKT) lines the ATP pocket.

Belongs to the RecA family.

Its subcellular location is the cytoplasm. Its function is as follows. Can catalyze the hydrolysis of ATP in the presence of single-stranded DNA, the ATP-dependent uptake of single-stranded DNA by duplex DNA, and the ATP-dependent hybridization of homologous single-stranded DNAs. It interacts with LexA causing its activation and leading to its autocatalytic cleavage. This chain is Protein RecA, found in Rubrobacter xylanophilus (strain DSM 9941 / JCM 11954 / NBRC 16129 / PRD-1).